Reading from the N-terminus, the 622-residue chain is 4-hydroxyphenylalkanoate adenylyltransferase (622 aa).

This sequence belongs to the ATP-dependent AMP-binding enzyme family.

The catalysed reaction is 17-(4-hydroxyphenyl)heptadecanoate + holo-[(phenol)carboxyphthiodiolenone synthase] + ATP = 17-(4-hydroxyphenyl)heptadecanoyl-[(phenol)carboxyphthiodiolenone synthase] + AMP + diphosphate. It catalyses the reaction 19-(4-hydroxyphenyl)nonadecanoate + holo-[(phenol)carboxyphthiodiolenone synthase] + ATP = 19-(4-hydroxyphenyl)nonadecanoyl-[(phenol)carboxyphthiodiolenone synthase] + AMP + diphosphate. It participates in lipid metabolism; fatty acid biosynthesis. Its function is as follows. Catalyzes the activation of long-chain fatty acids as acyl-adenylates (acyl-AMP), which are then transferred to the multifunctional polyketide synthase PpsA for further chain extension. Involved in the biosynthesis of phenolphthiocerol, which is an important intermediate in the biosynthesis of phenolic glycolipid (PGL), also called mycosid B. The polypeptide is 4-hydroxyphenylalkanoate adenylyltransferase (fadD29) (Mycobacterium marinum (strain ATCC BAA-535 / M)).